Here is a 308-residue protein sequence, read N- to C-terminus: MRIAFLGTPDFAVTCLAELVASGHEIVCVYSQPPAPRGRGQDLKPSPVHAFAEGLGLPVRTPVSMKTPEEIAAFQALDLDAAVVVAFGQILVKDVLEAPKHGCFNLHASLLPRWRGAAPIQRAIMAGDAVTGVQVMRMSEGLDEGPILMSQQVAIADDDTAASLHDKLAAVGARLLPVALAAIEREVVQETPQAEDGVTYAKKIKSAEARIDWTRPAAEIDRHIRGLSPFPGAWFEAPSEKGPVRVKALLSRVEAASGVAGTTLDDALLIACGEGSIRLLKAQREGKGVQDAQTFTRGFPIATGTVLA.

Residue 109–112 coordinates (6S)-5,6,7,8-tetrahydrofolate; sequence SLLP.

The protein belongs to the Fmt family.

The enzyme catalyses L-methionyl-tRNA(fMet) + (6R)-10-formyltetrahydrofolate = N-formyl-L-methionyl-tRNA(fMet) + (6S)-5,6,7,8-tetrahydrofolate + H(+). In terms of biological role, attaches a formyl group to the free amino group of methionyl-tRNA(fMet). The formyl group appears to play a dual role in the initiator identity of N-formylmethionyl-tRNA by promoting its recognition by IF2 and preventing the misappropriation of this tRNA by the elongation apparatus. The polypeptide is Methionyl-tRNA formyltransferase (Caulobacter vibrioides (strain NA1000 / CB15N) (Caulobacter crescentus)).